The following is a 784-amino-acid chain: Cadherin-5 (784 aa).

Positions 1–24 (MQRLTELATALGAFLGLLAVAAMA) are cleaved as a signal peptide. Residues 25 to 45 (GPNFPQIDTPNMLPAHHRQKR) constitute a propeptide that is removed on maturation. 5 Cadherin domains span residues 46 to 149 (DWIW…WPVF), 150 to 256 (SHQV…FPVF), 257 to 371 (TQST…PPVF), 372 to 476 (QRHF…DNPP), and 477 to 593 (EFAQ…MAAQ). Topologically, residues 46 to 599 (DWIWNQMHID…MAAQAGVSIQ (554 aa)) are extracellular. Residues E56 and E57 each contribute to the Ca(2+) site. Residue N59 is glycosylated (N-linked (GlcNAc...) asparagine). D107, E109, D141, I142, N143, D144, and N145 together coordinate Ca(2+). The N-linked (GlcNAc...) asparagine glycan is linked to N155. Residues D175, D177, H184, and D229 each contribute to the Ca(2+) site. 3 N-linked (GlcNAc...) asparagine glycosylation sites follow: N441, N523, and N535. The helical transmembrane segment at 600 to 620 (ALVAIFLCILTITVITLLIIL) threads the bilayer. Positions 621 to 660 (RRRIRKQAHAHSKSALEIHEQLVTYDEEGGGEMDTTSYDV) are required for interaction with PALS1. Topologically, residues 621–784 (RRRIRKQAHA…GSDPQEELII (164 aa)) are cytoplasmic.

As to quaternary structure, part of a complex composed of AMOTL2, MAGI1 and CDH5, within the complex AMOTL2 acts as a scaffold protein for the interaction of MAGI1 with CDH5. The complex is required for coupling actin fibers to cell junctions in endothelial cells. Within the complex AMOTL2 (via its N-terminus) interacts with CDH5. Interacts (via cadherin 5 domain) with PTPRB. Interacts with TRPC4. Interacts with KRIT1. Interacts with PARD3. Interacts with RTN4 (isoform B). Interacts with PALS1; the interaction promotes PALS1 localization to cell junctions and is required for CDH5-mediated vascular lumen formation and endothelial cell polarity. Interacts with CTNND1/p120-catenin; the interaction controls CADH5 endocytosis. In terms of processing, phosphorylated on tyrosine residues by KDR/VEGFR-2. Dephosphorylated by PTPRB. Post-translationally, O-glycosylated. In terms of tissue distribution, expressed in postnatal endothelial cells of the retinal vascular plexus (at protein level).

It localises to the cell junction. The protein localises to the adherens junction. Its subcellular location is the cell membrane. The protein resides in the cytoplasm. Cadherins are calcium-dependent cell adhesion proteins. They preferentially interact with themselves in a homophilic manner in connecting cells; cadherins may thus contribute to the sorting of heterogeneous cell types. This cadherin may play an important role in endothelial cell biology through control of the cohesion and organization of the intercellular junctions. It associates with alpha-catenin forming a link to the cytoskeleton. Plays a role in coupling actin fibers to cell junctions in endothelial cells, via acting as a cell junctional complex anchor for AMOTL2 and MAGI1. Acts in concert with KRIT1 and PALS1 to establish and maintain correct endothelial cell polarity and vascular lumen. These effects are mediated by recruitment and activation of the Par polarity complex and RAP1B. Required for activation of PRKCZ and for localization of phosphorylated PRKCZ, PARD3, TIAM1 and RAP1B to the cell junction. Associates with CTNND1/p120-catenin to control CADH5 endocytosis. This chain is Cadherin-5, found in Mus musculus (Mouse).